We begin with the raw amino-acid sequence, 873 residues long: Protein translocase subunit SecA (873 aa).

ATP is bound by residues Q88, 106–110 (GEGKT), and D501. Zn(2+) contacts are provided by C856, C858, C867, and H868.

This sequence belongs to the SecA family. In terms of assembly, monomer and homodimer. Part of the essential Sec protein translocation apparatus which comprises SecA, SecYEG and auxiliary proteins SecDF-YajC and YidC. It depends on Zn(2+) as a cofactor.

The protein resides in the cell inner membrane. The protein localises to the cytoplasm. It catalyses the reaction ATP + H2O + cellular proteinSide 1 = ADP + phosphate + cellular proteinSide 2.. In terms of biological role, part of the Sec protein translocase complex. Interacts with the SecYEG preprotein conducting channel. Has a central role in coupling the hydrolysis of ATP to the transfer of proteins into and across the cell membrane, serving both as a receptor for the preprotein-SecB complex and as an ATP-driven molecular motor driving the stepwise translocation of polypeptide chains across the membrane. The chain is Protein translocase subunit SecA from Anaplasma phagocytophilum (strain HZ).